The sequence spans 261 residues: Cytochrome c oxidase subunit 3 (261 aa).

The Mitochondrial matrix portion of the chain corresponds to 1 to 15 (MTHQTHAYHMVNPSP). The chain crosses the membrane as a helical span at residues 16 to 34 (WPLTGALSALLMTSGLIMW). The Mitochondrial intermembrane segment spans residues 35–40 (FHFNST). A helical transmembrane segment spans residues 41 to 66 (ALLMLGLTTNMLTMYQWWRDIVREST). At 67-72 (FQGHHT) the chain is on the mitochondrial matrix side. A helical transmembrane segment spans residues 73–105 (PTVQKGLRYGMILFIISEVLFFTGFFWAFYHSS). Over 106-128 (LAPTPELGGCWPPTGIHPLNPLE) the chain is Mitochondrial intermembrane. The helical transmembrane segment at 129-152 (VPLLNTSVLLASGVSITWAHHSLM) threads the bilayer. The Mitochondrial matrix portion of the chain corresponds to 153–155 (EGN). Residues 156-183 (RNHMLQALFITIALGVYFTLLQASEYYE) form a helical membrane-spanning segment. Residues 184–190 (APFTISD) are Mitochondrial intermembrane-facing. A helical transmembrane segment spans residues 191-223 (GVYGSTFFVATGFHGLHVIIGSTFLIVCFFRQL). Residues 224-232 (KFHFTSNHH) lie on the Mitochondrial matrix side of the membrane. Residues 233–256 (FGFEAAAWYWHFVDVVWLFLYVSI) form a helical membrane-spanning segment. The Mitochondrial intermembrane portion of the chain corresponds to 257-261 (YWWGS).

This sequence belongs to the cytochrome c oxidase subunit 3 family. In terms of assembly, component of the cytochrome c oxidase (complex IV, CIV), a multisubunit enzyme composed of 14 subunits. The complex is composed of a catalytic core of 3 subunits MT-CO1, MT-CO2 and MT-CO3, encoded in the mitochondrial DNA, and 11 supernumerary subunits COX4I, COX5A, COX5B, COX6A, COX6B, COX6C, COX7A, COX7B, COX7C, COX8 and NDUFA4, which are encoded in the nuclear genome. The complex exists as a monomer or a dimer and forms supercomplexes (SCs) in the inner mitochondrial membrane with NADH-ubiquinone oxidoreductase (complex I, CI) and ubiquinol-cytochrome c oxidoreductase (cytochrome b-c1 complex, complex III, CIII), resulting in different assemblies (supercomplex SCI(1)III(2)IV(1) and megacomplex MCI(2)III(2)IV(2)).

It is found in the mitochondrion inner membrane. It catalyses the reaction 4 Fe(II)-[cytochrome c] + O2 + 8 H(+)(in) = 4 Fe(III)-[cytochrome c] + 2 H2O + 4 H(+)(out). In terms of biological role, component of the cytochrome c oxidase, the last enzyme in the mitochondrial electron transport chain which drives oxidative phosphorylation. The respiratory chain contains 3 multisubunit complexes succinate dehydrogenase (complex II, CII), ubiquinol-cytochrome c oxidoreductase (cytochrome b-c1 complex, complex III, CIII) and cytochrome c oxidase (complex IV, CIV), that cooperate to transfer electrons derived from NADH and succinate to molecular oxygen, creating an electrochemical gradient over the inner membrane that drives transmembrane transport and the ATP synthase. Cytochrome c oxidase is the component of the respiratory chain that catalyzes the reduction of oxygen to water. Electrons originating from reduced cytochrome c in the intermembrane space (IMS) are transferred via the dinuclear copper A center (CU(A)) of subunit 2 and heme A of subunit 1 to the active site in subunit 1, a binuclear center (BNC) formed by heme A3 and copper B (CU(B)). The BNC reduces molecular oxygen to 2 water molecules using 4 electrons from cytochrome c in the IMS and 4 protons from the mitochondrial matrix. In Cephalophorus natalensis (Natal red duiker), this protein is Cytochrome c oxidase subunit 3 (MT-CO3).